A 399-amino-acid polypeptide reads, in one-letter code: Acetate kinase 2 (399 aa).

Asparagine 10 lines the Mg(2+) pocket. Lysine 17 provides a ligand contact to ATP. A substrate-binding site is contributed by arginine 89. The active-site Proton donor/acceptor is aspartate 146. Residues 206–210 (HLGNG), 281–283 (DCR), and 329–333 (GIGEN) contribute to the ATP site. A Mg(2+)-binding site is contributed by glutamate 384.

It belongs to the acetokinase family. In terms of assembly, homodimer. The cofactor is Mg(2+). Mn(2+) serves as cofactor.

It localises to the cytoplasm. The catalysed reaction is acetate + ATP = acetyl phosphate + ADP. It functions in the pathway metabolic intermediate biosynthesis; acetyl-CoA biosynthesis; acetyl-CoA from acetate: step 1/2. In terms of biological role, catalyzes the formation of acetyl phosphate from acetate and ATP. Can also catalyze the reverse reaction. The polypeptide is Acetate kinase 2 (Neisseria meningitidis serogroup A / serotype 4A (strain DSM 15465 / Z2491)).